The following is a 67-amino-acid chain: UPF0437 protein y4xE (67 aa).

Belongs to the UPF0437 family.

The polypeptide is UPF0437 protein y4xE (Sinorhizobium fredii (strain NBRC 101917 / NGR234)).